The sequence spans 274 residues: MPIVKSKPTSAGRRFVVSVVSPDLHKGEPYAPLVEKKVRSGGRNNQGRITTRHVGGGHKQRYRIIDFKRDKDGIPGRVERLEYDPNRSAHIALVLYADGERRYVIAPKGVQAGDQLLSGTNAPIRAGNTLPLRNIPVGTVVHCIEMKPGKGAQMARSAGAAVQLVAREGQHATLRLRSGEMRKVPADCRATIGEVSNSEHSLRKFGKAGAKRWLGIRPTVRGTAMNPVDHPHGGGEGRNFGKHPVTPWGVPTKGYKTRKNKRTDNMIVRRRNKK.

The interval 221 to 256 (RGTAMNPVDHPHGGGEGRNFGKHPVTPWGVPTKGYK) is disordered.

This sequence belongs to the universal ribosomal protein uL2 family. Part of the 50S ribosomal subunit. Forms a bridge to the 30S subunit in the 70S ribosome.

Its function is as follows. One of the primary rRNA binding proteins. Required for association of the 30S and 50S subunits to form the 70S ribosome, for tRNA binding and peptide bond formation. It has been suggested to have peptidyltransferase activity; this is somewhat controversial. Makes several contacts with the 16S rRNA in the 70S ribosome. This is Large ribosomal subunit protein uL2 from Thioalkalivibrio sulfidiphilus (strain HL-EbGR7).